A 540-amino-acid polypeptide reads, in one-letter code: 2,3-bisphosphoglycerate-independent phosphoglycerate mutase (540 aa).

The Mn(2+) site is built by D24 and S74. S74 functions as the Phosphoserine intermediate in the catalytic mechanism. Residues H135, 165–166 (RD), R197, R203, 268–271 (RPDR), and K341 each bind substrate. The Mn(2+) site is built by D408, H412, D449, H450, and H467.

It belongs to the BPG-independent phosphoglycerate mutase family. In terms of assembly, monomer. Mn(2+) serves as cofactor.

The enzyme catalyses (2R)-2-phosphoglycerate = (2R)-3-phosphoglycerate. It participates in carbohydrate degradation; glycolysis; pyruvate from D-glyceraldehyde 3-phosphate: step 3/5. Catalyzes the interconversion of 2-phosphoglycerate and 3-phosphoglycerate. The sequence is that of 2,3-bisphosphoglycerate-independent phosphoglycerate mutase from Prochlorococcus marinus (strain MIT 9303).